A 335-amino-acid chain; its full sequence is Taste receptor type 2 member 119 (335 aa).

The Extracellular portion of the chain corresponds to 1–7; that stretch reads MMEGHIL. The helical transmembrane segment at 8-28 threads the bilayer; that stretch reads FFFLVVMVQFVTGVLANGLIV. Topologically, residues 29 to 43 are cytoplasmic; the sequence is VVHAIDLIMWKKMAP. Residues 44-64 traverse the membrane as a helical segment; the sequence is LDLLLFCLATSRIILQLCILF. At 65 to 81 the chain is on the extracellular side; it reads AQLCLFSLVRHTLFEDN. Residue Asn81 is glycosylated (N-linked (GlcNAc...) asparagine). A helical membrane pass occupies residues 82–102; the sequence is ITFVFIINELSLWFATWLGVF. Topologically, residues 103-124 are cytoplasmic; that stretch reads YCAKIATIPHPLFLWLKMRISR. A helical transmembrane segment spans residues 125 to 145; it reads LVPWLILGSVLYVIITTFIHS. The Extracellular portion of the chain corresponds to 146 to 176; sequence RETSAILKPIFISLFPKNATQVGTGHATLLS. Asn163 carries an N-linked (GlcNAc...) asparagine glycan. Residues 177–197 traverse the membrane as a helical segment; sequence VLVLGLTLPLFIFTVAVLLLI. Over 198–224 the chain is Cytoplasmic; that stretch reads YSLWNYSRQMRTMVGTREYSGHAHISA. A helical membrane pass occupies residues 225–245; it reads MLSILSFLILYLSHYMVAVLI. At 246-256 the chain is on the extracellular side; that stretch reads STQVLYLGSRT. A helical transmembrane segment spans residues 257–277; sequence FVFCLLVIGMYPSIHSIVLIL. At 278–335 the chain is on the cytoplasmic side; the sequence is GNPKLKRNAKMFIVHCKCCHCTRAWVTSRSPRLSDLPVPPTHPSANKTSCSEACIMPS. The interval 308–327 is disordered; the sequence is PRLSDLPVPPTHPSANKTSC.

It belongs to the G-protein coupled receptor T2R family. Expressed in subsets of taste receptor cells of the tongue and palate epithelium and exclusively in gustducin-positive cells. Expressed in the duodenum, antrum and fundus (part of the stomach).

Its subcellular location is the membrane. In terms of biological role, gustducin-coupled receptor implicated in the perception of bitter compounds in the oral cavity and the gastrointestinal tract. Signals through PLCB2 and the calcium-regulated cation channel TRPM5. The chain is Taste receptor type 2 member 119 (Tas2r119) from Rattus norvegicus (Rat).